The primary structure comprises 108 residues: UPF0060 membrane protein KPN78578_15550 (108 aa).

The next 4 membrane-spanning stretches (helical) occupy residues 6-26 (LLFF…WLWL), 29-49 (GATP…VWLL), 61-81 (AAYG…VDGV), and 86-106 (YDWA…AGWG).

Belongs to the UPF0060 family.

Its subcellular location is the cell inner membrane. The protein is UPF0060 membrane protein KPN78578_15550 of Klebsiella pneumoniae subsp. pneumoniae (strain ATCC 700721 / MGH 78578).